We begin with the raw amino-acid sequence, 468 residues long: MSKPTTLYDKIWNDHLVHEAEDGTCLIYIDRHLVHEVTSPQAFEGLRVAGRKVHAPEKTLAVVDHNVPTTDRTKPNPDPESAEQIATLAQNAKDFGIEYYNEFDKRQGIVHVIGPEQGFTLPGTTIVCGDSHTSTHGAFGALAHGIGTSEVEHVLATQTLIQKKAKNMRAVVYGTLPDGVTAKDIILAIIGEIGTAGGTGYVLEYAGEAIRALTMEGRMTVCNMSIEGGARAGLVAPDEKAYEFLKGRPKAPRGADWDAAMRYWETLRSDDGAHFDHEIRLDAARLPPIVTWGTSPEDVISVTGKVPNPADIADEAKRLSKERALHYMGLAAGTRITDITLDRVFIGSCTNGRIEDLRAAAKIADGRTVNGNVNAMVVPGSGLVKEQAEAEGLDKIFIKAGFEWREPGCSMCLAMNPDKLKPEERCASTSNRNFEGRQGFKGRTHLVSPAMAAAAAIAGHFVDVREWH.

3 residues coordinate [4Fe-4S] cluster: Cys349, Cys409, and Cys412.

This sequence belongs to the aconitase/IPM isomerase family. LeuC type 1 subfamily. As to quaternary structure, heterodimer of LeuC and LeuD. [4Fe-4S] cluster is required as a cofactor.

The catalysed reaction is (2R,3S)-3-isopropylmalate = (2S)-2-isopropylmalate. Its pathway is amino-acid biosynthesis; L-leucine biosynthesis; L-leucine from 3-methyl-2-oxobutanoate: step 2/4. Its function is as follows. Catalyzes the isomerization between 2-isopropylmalate and 3-isopropylmalate, via the formation of 2-isopropylmaleate. This chain is 3-isopropylmalate dehydratase large subunit, found in Nitrobacter hamburgensis (strain DSM 10229 / NCIMB 13809 / X14).